Consider the following 76-residue polypeptide: Sec-independent protein translocase protein TatA (76 aa).

The helical transmembrane segment at 1–21 threads the bilayer; the sequence is MGSFSIWHWLIVLVIVMLVFG. Basic and acidic residues-rich tracts occupy residues 41–50 and 57–76; these read DGMKDGEDKG and KELRDSTTIDVDAKEKSRQQ. Residues 41 to 76 are disordered; it reads DGMKDGEDKGAQPAASKELRDSTTIDVDAKEKSRQQ.

Belongs to the TatA/E family. As to quaternary structure, the Tat system comprises two distinct complexes: a TatABC complex, containing multiple copies of TatA, TatB and TatC subunits, and a separate TatA complex, containing only TatA subunits. Substrates initially bind to the TatABC complex, which probably triggers association of the separate TatA complex to form the active translocon.

It is found in the cell inner membrane. Functionally, part of the twin-arginine translocation (Tat) system that transports large folded proteins containing a characteristic twin-arginine motif in their signal peptide across membranes. TatA could form the protein-conducting channel of the Tat system. The protein is Sec-independent protein translocase protein TatA of Cupriavidus taiwanensis (strain DSM 17343 / BCRC 17206 / CCUG 44338 / CIP 107171 / LMG 19424 / R1) (Ralstonia taiwanensis (strain LMG 19424)).